The following is a 621-amino-acid chain: tRNA uridine 5-carboxymethylaminomethyl modification enzyme MnmG (621 aa).

An FAD-binding site is contributed by 8–13; sequence GAGHAG. 269 to 283 serves as a coordination point for NAD(+); the sequence is GPRYCPSIEDKIHRF.

The protein belongs to the MnmG family. Homodimer. Heterotetramer of two MnmE and two MnmG subunits. Requires FAD as cofactor.

The protein localises to the cytoplasm. Functionally, NAD-binding protein involved in the addition of a carboxymethylaminomethyl (cmnm) group at the wobble position (U34) of certain tRNAs, forming tRNA-cmnm(5)s(2)U34. In Chlorobium phaeovibrioides (strain DSM 265 / 1930) (Prosthecochloris vibrioformis (strain DSM 265)), this protein is tRNA uridine 5-carboxymethylaminomethyl modification enzyme MnmG.